The following is a 606-amino-acid chain: Elongation factor 4 (606 aa).

Positions 7-189 (SRIRNFCIIA…AVVDRVPPPK (183 aa)) constitute a tr-type G domain. Residues 19–24 (DHGKST) and 136–139 (NKID) contribute to the GTP site.

This sequence belongs to the TRAFAC class translation factor GTPase superfamily. Classic translation factor GTPase family. LepA subfamily.

It localises to the cell inner membrane. The enzyme catalyses GTP + H2O = GDP + phosphate + H(+). Functionally, required for accurate and efficient protein synthesis under certain stress conditions. May act as a fidelity factor of the translation reaction, by catalyzing a one-codon backward translocation of tRNAs on improperly translocated ribosomes. Back-translocation proceeds from a post-translocation (POST) complex to a pre-translocation (PRE) complex, thus giving elongation factor G a second chance to translocate the tRNAs correctly. Binds to ribosomes in a GTP-dependent manner. This Parasynechococcus marenigrum (strain WH8102) protein is Elongation factor 4.